A 266-amino-acid polypeptide reads, in one-letter code: F-box/kelch-repeat protein At4g39560 (266 aa).

The region spanning serine 24–arginine 70 is the F-box domain. 3 Kelch repeats span residues aspartate 130–glycine 176, isoleucine 178–valine 223, and glutamate 226–alanine 266.

The chain is F-box/kelch-repeat protein At4g39560 from Arabidopsis thaliana (Mouse-ear cress).